An 83-amino-acid chain; its full sequence is Cytochrome b559 subunit alpha (83 aa).

Residues 21 to 35 traverse the membrane as a helical segment; the sequence is VIHSITIPSLFIAGW. Residue histidine 23 coordinates heme.

This sequence belongs to the PsbE/PsbF family. Heterodimer of an alpha subunit and a beta subunit. PSII is composed of 1 copy each of membrane proteins PsbA, PsbB, PsbC, PsbD, PsbE, PsbF, PsbH, PsbI, PsbJ, PsbK, PsbL, PsbM, PsbT, PsbX, PsbY, PsbZ, Psb30/Ycf12, at least 3 peripheral proteins of the oxygen-evolving complex and a large number of cofactors. It forms dimeric complexes. Heme b serves as cofactor.

The protein resides in the plastid. The protein localises to the chloroplast thylakoid membrane. In terms of biological role, this b-type cytochrome is tightly associated with the reaction center of photosystem II (PSII). PSII is a light-driven water:plastoquinone oxidoreductase that uses light energy to abstract electrons from H(2)O, generating O(2) and a proton gradient subsequently used for ATP formation. It consists of a core antenna complex that captures photons, and an electron transfer chain that converts photonic excitation into a charge separation. In Chlorella vulgaris (Green alga), this protein is Cytochrome b559 subunit alpha.